The sequence spans 251 residues: MNLISIPAFQDNYIWLLADEQKHCVIVDPGESAPVLAALSQGQYLPQAILLTHHHNDHVGGVADLRRHFPEIPVYGPQETANKGATIMVTGGDHLSIGGQNYQVIAVPGHTLEHIAYYSKPYLFCGDTLFSAGCGRLFEGTPAQMYASIQQLAQLPDETLICSAHEYTLANLKFARFILPSDQDIATYQQQIMQLRAKNQPSLPVKLQIERKINVFLRCDDIDLQRKIGVISPPNSLVSVFSELRAQKDRF.

Zn(2+)-binding residues include histidine 53, histidine 55, aspartate 57, histidine 58, histidine 110, aspartate 127, and histidine 165.

The protein belongs to the metallo-beta-lactamase superfamily. Glyoxalase II family. In terms of assembly, monomer. Zn(2+) serves as cofactor.

It carries out the reaction an S-(2-hydroxyacyl)glutathione + H2O = a 2-hydroxy carboxylate + glutathione + H(+). It participates in secondary metabolite metabolism; methylglyoxal degradation; (R)-lactate from methylglyoxal: step 2/2. Its function is as follows. Thiolesterase that catalyzes the hydrolysis of S-D-lactoyl-glutathione to form glutathione and D-lactic acid. The polypeptide is Hydroxyacylglutathione hydrolase (Yersinia enterocolitica serotype O:8 / biotype 1B (strain NCTC 13174 / 8081)).